The following is a 78-amino-acid chain: MALIRKTFYFLFAVFFILVQLPSGCQAGLDFSQPFPSGEFAVCESCKLGRGKCRKECLENEKPDGNCRLNFLCCRQRI.

The signal sequence occupies residues 1-27 (MALIRKTFYFLFAVFFILVQLPSGCQA). Intrachain disulfides connect cysteine 43–cysteine 74, cysteine 53–cysteine 67, and cysteine 57–cysteine 73.

This sequence belongs to the beta-defensin family.

It is found in the secreted. In terms of biological role, has antimicrobial activity. This chain is Beta-defensin 105A (DEFB105A), found in Gorilla gorilla gorilla (Western lowland gorilla).